Consider the following 349-residue polypeptide: UPF0324 inner membrane protein YeiH (349 aa).

Residues 1–12 (MTELTLQNHCRT) are Periplasmic-facing. A helical transmembrane segment spans residues 13–35 (MWHFIPGLALSAVITGVALWGGA). At 36-38 (IPA) the chain is on the cytoplasmic side. The chain crosses the membrane as a helical span at residues 39–61 (VAGAGFSALTLAILLGMVIGNTI). The Periplasmic segment spans residues 62–99 (YPQIWKQCDGGVLFAKQHLLRLGIILYGFRLTFSQIAD). The chain crosses the membrane as a helical span at residues 100–122 (VGISGIVIDVLTLSSTFMLACFL). At 123–131 (GQKVFGLDR) the chain is on the cytoplasmic side. A helical transmembrane segment spans residues 132–151 (HTSWLIGAGSSICGAAAVLA). Topologically, residues 152 to 162 (TEPVVKAEASK) are periplasmic. The chain crosses the membrane as a helical span at residues 163 to 185 (VTVAVATVVIFGTIAIFLYPAMY). Residues 186 to 261 (PLLAHWFSPE…SPATGAEKSK (76 aa)) lie on the Cytoplasmic side of the membrane. The chain crosses the membrane as a helical span at residues 262 to 284 (ITIPWFAIFFIVVAIFNSFHLLP). Residues 285–290 (KAVVDM) lie on the Periplasmic side of the membrane. Residues 291 to 313 (LVTLDTVLLAMAMAALGLTTHVS) form a helical membrane-spanning segment. At 314 to 322 (ALKKAGAKP) the chain is on the cytoplasmic side. The chain crosses the membrane as a helical span at residues 323–345 (LLMALALFAWLIIGGGAINVLIH). Over 346-349 (SLIA) the chain is Periplasmic.

This sequence belongs to the UPF0324 family.

It localises to the cell inner membrane. This chain is UPF0324 inner membrane protein YeiH (yeiH), found in Salmonella typhimurium (strain LT2 / SGSC1412 / ATCC 700720).